The sequence spans 243 residues: Small ribosomal subunit protein uS3 (243 aa).

Positions 39 to 110 constitute a KH type-2 domain; it reads IRTFIQKKYG…QVRINVVEVE (72 aa). The interval 216–243 is disordered; the sequence is QTIPVGASPKRKASRRPQQFEDRSNENS. The segment covering 233 to 243 has biased composition (basic and acidic residues); the sequence is QQFEDRSNENS.

It belongs to the universal ribosomal protein uS3 family. In terms of assembly, part of the 30S ribosomal subunit. Forms a tight complex with proteins S10 and S14.

In terms of biological role, binds the lower part of the 30S subunit head. Binds mRNA in the 70S ribosome, positioning it for translation. The polypeptide is Small ribosomal subunit protein uS3 (Prochlorococcus marinus (strain AS9601)).